Reading from the N-terminus, the 106-residue chain is uncharacterized protein (106 aa).

A compositionally biased stretch (polar residues) spans 24 to 35 (ANSISSTSFYHK). 2 disordered regions span residues 24–49 (ANSI…SCEE) and 65–87 (LTAE…SSDE). Composition is skewed to low complexity over residues 36–46 (SSNNNSHANAS) and 74–85 (SLSASNQPASSS).

This is an uncharacterized protein from Arabidopsis thaliana (Mouse-ear cress).